Reading from the N-terminus, the 397-residue chain is Transcription factor GATA-5 (397 aa).

The tract at residues Gly-48–Tyr-116 is disordered. Low complexity predominate over residues Pro-87–Gly-101. Residues Pro-102–Asp-112 show a composition bias toward gly residues. 2 GATA-type zinc fingers span residues Cys-189–Cys-213 and Cys-243–Cys-267. A disordered region spans residues Ala-281 to Ala-356. The span at Thr-289–Ala-298 shows a compositional bias: basic residues. Positions Ala-310–Ser-335 are enriched in low complexity.

It is found in the nucleus. Functionally, transcription factor required during cardiovascular development. Plays an important role in the transcriptional program(s) that underlies smooth muscle cell diversity. Binds to the functionally important CEF-1 nuclear protein binding site in the cardiac-specific slow/cardiac troponin C transcriptional enhancer. This is Transcription factor GATA-5 from Homo sapiens (Human).